The chain runs to 279 residues: Acyl-[acyl-carrier-protein]--UDP-N-acetylglucosamine O-acyltransferase (279 aa).

The segment at Ile-256 to Ser-279 is disordered.

The protein belongs to the transferase hexapeptide repeat family. LpxA subfamily. As to quaternary structure, homotrimer.

The protein resides in the cytoplasm. It carries out the reaction a (3R)-hydroxyacyl-[ACP] + UDP-N-acetyl-alpha-D-glucosamine = a UDP-3-O-[(3R)-3-hydroxyacyl]-N-acetyl-alpha-D-glucosamine + holo-[ACP]. Its pathway is glycolipid biosynthesis; lipid IV(A) biosynthesis; lipid IV(A) from (3R)-3-hydroxytetradecanoyl-[acyl-carrier-protein] and UDP-N-acetyl-alpha-D-glucosamine: step 1/6. Its function is as follows. Involved in the biosynthesis of lipid A, a phosphorylated glycolipid that anchors the lipopolysaccharide to the outer membrane of the cell. The polypeptide is Acyl-[acyl-carrier-protein]--UDP-N-acetylglucosamine O-acyltransferase (Chlamydia caviae (strain ATCC VR-813 / DSM 19441 / 03DC25 / GPIC) (Chlamydophila caviae)).